The primary structure comprises 524 residues: Dihydromonacolin L monooxygenase mokC (524 aa).

Residues 1–25 (MTVPTDTVSRRLQSLAWSDIKQHAP) are Cytoplasmic-facing. Residues 26–47 (WLPSSRTLVSGFLCLILLQILY) form a helical; Signal-anchor for type II membrane protein membrane-spanning segment. Over 48-524 (SRGRKSDLRV…LMMRRRDEDL (477 aa)) the chain is Lumenal. N-linked (GlcNAc...) asparagine glycans are attached at residues Asn396 and Asn401. Cys467 provides a ligand contact to heme.

The protein belongs to the cytochrome P450 family. It depends on heme as a cofactor.

It localises to the endoplasmic reticulum membrane. It catalyses the reaction dihydromonacolin L carboxylate + reduced [NADPH--hemoprotein reductase] + O2 = monacolin L carboxylate + oxidized [NADPH--hemoprotein reductase] + 2 H2O + H(+). It carries out the reaction monacolin L carboxylate + reduced [NADPH--hemoprotein reductase] + O2 = monacolin J carboxylate + oxidized [NADPH--hemoprotein reductase] + H2O + H(+). It functions in the pathway polyketide biosynthesis; lovastatin biosynthesis. In terms of biological role, cytochrome P450 monooxygenase; part of the gene cluster that mediates the biosynthesis of monakolin K, also known as lovastatin, and which acts as a potent competitive inhibitor of HMG-CoA reductase. Monakolin K biosynthesis is performed in two stages. The first stage is catalyzed by the nonaketide synthase mokA, which belongs to type I polyketide synthases and catalyzes the iterative nine-step formation of the polyketide. This PKS stage is completed by the action of dehydrogenase mokE, which catalyzes the NADPH-dependent reduction of the unsaturated tetra-, penta- and heptaketide intermediates that arise during the mokA-mediated biosynthesis of the nonaketide chain and leads to dihydromonacolin L. Covalently bound dihydromonacolin L is released from mokA by the mokD esterase. Conversion of dihydromonacolin L into monacolin L and then monacolin J is subsequently performed with the participation of molecular oxygen and P450 monoogygenase mokC. Finally, mokF performs the conversion of monacoline J to monacoline K through the addition of the side-chain diketide moiety (2R)-2-methylbutanoate produced by the diketide synthase mokB. The polypeptide is Dihydromonacolin L monooxygenase mokC (Monascus pilosus (Red mold)).